A 513-amino-acid polypeptide reads, in one-letter code: ATP synthase subunit alpha 2 (513 aa).

An ATP-binding site is contributed by 169–176; sequence GDRQTGKT.

It belongs to the ATPase alpha/beta chains family. F-type ATPases have 2 components, CF(1) - the catalytic core - and CF(0) - the membrane proton channel. CF(1) has five subunits: alpha(3), beta(3), gamma(1), delta(1), epsilon(1). CF(0) has three main subunits: a(1), b(2) and c(9-12). The alpha and beta chains form an alternating ring which encloses part of the gamma chain. CF(1) is attached to CF(0) by a central stalk formed by the gamma and epsilon chains, while a peripheral stalk is formed by the delta and b chains.

The protein resides in the cell inner membrane. The enzyme catalyses ATP + H2O + 4 H(+)(in) = ADP + phosphate + 5 H(+)(out). In terms of biological role, produces ATP from ADP in the presence of a proton gradient across the membrane. The alpha chain is a regulatory subunit. The sequence is that of ATP synthase subunit alpha 2 from Shewanella frigidimarina (strain NCIMB 400).